Reading from the N-terminus, the 100-residue chain is NAD(P)H-quinone oxidoreductase subunit 4L, chloroplastic (100 aa).

3 helical membrane-spanning segments follow: residues 1-21 (MFGHALLLGAFPFCIGIYGLI), 29-49 (ALMCLELIFNAVNVNFVTFPN), and 63-83 (VFVIAVAAAEAAIGSAIVLAI).

Belongs to the complex I subunit 4L family. NDH is composed of at least 16 different subunits, 5 of which are encoded in the nucleus.

It is found in the plastid. It localises to the chloroplast thylakoid membrane. The enzyme catalyses a plastoquinone + NADH + (n+1) H(+)(in) = a plastoquinol + NAD(+) + n H(+)(out). It catalyses the reaction a plastoquinone + NADPH + (n+1) H(+)(in) = a plastoquinol + NADP(+) + n H(+)(out). Functionally, NDH shuttles electrons from NAD(P)H:plastoquinone, via FMN and iron-sulfur (Fe-S) centers, to quinones in the photosynthetic chain and possibly in a chloroplast respiratory chain. The immediate electron acceptor for the enzyme in this species is believed to be plastoquinone. Couples the redox reaction to proton translocation, and thus conserves the redox energy in a proton gradient. This Huperzia lucidula (Shining clubmoss) protein is NAD(P)H-quinone oxidoreductase subunit 4L, chloroplastic.